Here is a 248-residue protein sequence, read N- to C-terminus: Tetraspanin-18 (248 aa).

The Cytoplasmic segment spans residues 1 to 13; sequence MEGDCLSCMKYLM. The chain crosses the membrane as a helical span at residues 14–34; that stretch reads FVFNFFIFLGGACLLAIGIWV. The Extracellular segment spans residues 35–49; it reads MVDPTGFREIVAANP. Residues 50–70 traverse the membrane as a helical segment; sequence LLLTGAYILLAMGGLLFLLGF. The Cytoplasmic portion of the chain corresponds to 71-83; it reads LGCCGAVRENKCL. Residues 84-104 form a helical membrane-spanning segment; that stretch reads LLFFFLFILIIFLAELSAAIL. At 105–223 the chain is on the extracellular side; that stretch reads AFIFRENLTR…TFETYVYLAG (119 aa). Asn111 and Asn129 each carry an N-linked (GlcNAc...) asparagine glycan. The helical transmembrane segment at 224 to 244 threads the bilayer; the sequence is ALAIGVLAIELFAMIFAMCLF. Residues 245 to 248 lie on the Cytoplasmic side of the membrane; that stretch reads RGIQ.

It belongs to the tetraspanin (TM4SF) family. As to quaternary structure, interacts with ORAI1; this interaction regulates ORAI1 exit from the endoplasmic (ER), and/or Golgi, and trafficking to the cell surface. As to expression, highly expressed in primary endothelial cells. Expressed in the embryo heart. Weakly expressed the embryo skeletal muscle.

The protein resides in the membrane. Functionally, plays a role in the cell surface localization of ORAI1 and may participate in the regulation of Ca(2+) signaling and the VWF release in response to inflammatory stimuli. The sequence is that of Tetraspanin-18 from Homo sapiens (Human).